The chain runs to 227 residues: UPF0173 metal-dependent hydrolase YtkL (227 aa).

The protein belongs to the UPF0173 family.

The polypeptide is UPF0173 metal-dependent hydrolase YtkL (ytkL) (Bacillus subtilis (strain 168)).